The sequence spans 326 residues: Transposase InsH for insertion sequence element IS5A (326 aa).

This sequence belongs to the transposase 11 family.

In terms of biological role, involved in the transposition of the insertion sequence IS5. The polypeptide is Transposase InsH for insertion sequence element IS5A (insH1) (Escherichia coli (strain K12)).